Here is a 501-residue protein sequence, read N- to C-terminus: Glycine betaine/proline/ectoine/pipecolic acid transporter OusA (501 aa).

Residues 1 to 38 lie on the Cytoplasmic side of the membrane; it reads MKLKRKRVKPIALDDVTIIDDGRLRKAITAAALGNAME. The chain crosses the membrane as a helical span at residues 39-59; it reads WFDFGVYGFVAYALGQVFFPG. At 60–66 the chain is on the periplasmic side; that stretch reads ADPGVQM. Residues 67-87 traverse the membrane as a helical segment; that stretch reads IAALATFSVPFLIRPLGGVFF. At 88 to 98 the chain is on the cytoplasmic side; that stretch reads GALGDKYGRQK. The helical transmembrane segment at 99-119 threads the bilayer; it reads ILAITIIIMSISTFCIGLIPS. Residues 120–122 lie on the Periplasmic side of the membrane; sequence YER. Residues 123–143 traverse the membrane as a helical segment; the sequence is IGIWAPILLLLAKMAQGFSVG. The Cytoplasmic segment spans residues 144–170; sequence GEYTGASIFVAEYSPDRKRGFMGSWLD. A helical transmembrane segment spans residues 171–191; it reads FGSIAGFVLGAGVVVLISTLI. Over 192–195 the chain is Periplasmic; that stretch reads GEQA. Residues 196–216 traverse the membrane as a helical segment; sequence FLAWGWRLPFFLALPLGLIGL. The Cytoplasmic portion of the chain corresponds to 217-261; it reads YLRHALEETPAFRQHVEKLEQNDRDGLKAGPGVSFREIATHHWKS. Residues 262–282 traverse the membrane as a helical segment; it reads LLVCIGLVIATNVTYYMLLTY. Residues 283 to 298 are Periplasmic-facing; that stretch reads MPSYLSHSLHYSENHG. A helical transmembrane segment spans residues 299 to 319; that stretch reads VLIIIAIMIGMLFVQPVMGLL. Residues 320 to 326 are Cytoplasmic-facing; the sequence is SDRFGRK. The helical transmembrane segment at 327–347 threads the bilayer; that stretch reads PFVVIGSVAMFFLAVPSFMLI. At 348-350 the chain is on the periplasmic side; sequence NSD. A helical transmembrane segment spans residues 351–371; it reads IIGLIFLGLLMLAVILNAFTG. Residues 372–391 lie on the Cytoplasmic side of the membrane; sequence VMASTLPALFPTHIRYSALA. A helical membrane pass occupies residues 392–412; the sequence is SAFNISVLIAGLTPTVAAWLV. Residues 413–417 lie on the Periplasmic side of the membrane; it reads ESSQN. Residues 418–438 traverse the membrane as a helical segment; the sequence is LYMPAYYLMVIAVIGLLTGLF. The Cytoplasmic portion of the chain corresponds to 439–501; it reads MKETANKPLK…LVAQHPRIND (63 aa). Residues 461–495 are a coiled coil; it reads KEILQEHHDNIEHKIEDITQQIAELEAKRQLLVAQ.

This sequence belongs to the major facilitator superfamily. Sugar transporter (TC 2.A.1.1) family.

It localises to the cell inner membrane. In terms of biological role, involved in uptake and accumulation of various osmoprotectants. Allows the uptake of glycine betaine, proline, ectoine, and pipecolic acid. May be a contributory factor in the infection progression within the host. The polypeptide is Glycine betaine/proline/ectoine/pipecolic acid transporter OusA (Dickeya dadantii (strain 3937) (Erwinia chrysanthemi (strain 3937))).